Here is a 314-residue protein sequence, read N- to C-terminus: Palmitoyl-protein thioesterase 1 (314 aa).

The signal sequence occupies residues 1–25; the sequence is MISICCSRFSCILFLLFLIFSLVLS. 3 disulfide bridges follow: Cys-53/Cys-54, Cys-104/Cys-136, and Cys-160/Cys-168. Ser-123 acts as the Nucleophile in catalysis. Residue Asn-240 is glycosylated (N-linked (GlcNAc...) asparagine). Catalysis depends on residues Asp-241 and His-295.

This sequence belongs to the palmitoyl-protein thioesterase family. Ubiquitously expressed.

It is found in the lysosome. The enzyme catalyses S-hexadecanoyl-L-cysteinyl-[protein] + H2O = L-cysteinyl-[protein] + hexadecanoate + H(+). Cleaves thioester-linked long fatty acyl groups such as palmitate from modified cysteine residues in proteins or peptides. The protein is Palmitoyl-protein thioesterase 1 (Ppt1) of Drosophila melanogaster (Fruit fly).